The sequence spans 219 residues: Probable glutathione S-transferase GSTF1 (219 aa).

The region spanning 2–83 (TPVKVFGPAQ…YILRKYKTRE (82 aa)) is the GST N-terminal domain. Glutathione-binding positions include serine 12, 41–42 (HK), 54–55 (QI), and 67–68 (ES). The 129-residue stretch at 91–219 (NLREAAMVDV…LAAVMAPQGA (129 aa)) folds into the GST C-terminal domain.

It belongs to the GST superfamily. Phi family. As to expression, constitutively expressed in roots.

It catalyses the reaction RX + glutathione = an S-substituted glutathione + a halide anion + H(+). In terms of biological role, conjugation of reduced glutathione to a wide number of exogenous and endogenous hydrophobic electrophiles. The chain is Probable glutathione S-transferase GSTF1 (GSTF1) from Oryza sativa subsp. japonica (Rice).